Here is a 572-residue protein sequence, read N- to C-terminus: MRTSQYLLATQKETPADAEVISHQLMLRAGMIRKLASGLYTWLPSGLRVLNKVANIVREEMNKAGAIEVLMPVVQPADLWEESGRWEEYGPELLRVKDRHQRDFVLGPTHEEVITALVRNEISSYKQLPLNLYQVQTKFRDEVRPRFGIMRGREFTMKDAYSFHLEDSCLEETYQKMYDAYCAIFSRMGLDFRAVIADSGSIGGNHSHEFHVLAESGEDAIAFSSDSDYAANVEMAAAVAPEKAVPSGADVETKDAKGKDFNAILKSVDANATNAVKVVLVKGANELNDKGEDVVCDKWVALVLRADHELNDIKAEKIDGVAIPLVEASFEQAKDVLGVSPFFADATNLPVPAYVDASAAALADFTTGAGAGGKVNVNVNWPDGINTVDIRNVVAGDASPDGQGTLDIKRGIEVGHIFQLGRKYSEAMNCGVLSETGKHQTLTMGCYGIGVSRIVAAAIEQNHDKFGIKWPDPIAPFKIALIPMNMHKSHRIKEAAEALYEELVALGIEVLFDDRKERPGVMFNDMELIGIPHSIVIGERNLDNQQVEYKNRRTGEKQLLDLSAAKEFVAAL.

It belongs to the class-II aminoacyl-tRNA synthetase family. ProS type 1 subfamily. As to quaternary structure, homodimer.

It is found in the cytoplasm. It carries out the reaction tRNA(Pro) + L-proline + ATP = L-prolyl-tRNA(Pro) + AMP + diphosphate. Its function is as follows. Catalyzes the attachment of proline to tRNA(Pro) in a two-step reaction: proline is first activated by ATP to form Pro-AMP and then transferred to the acceptor end of tRNA(Pro). As ProRS can inadvertently accommodate and process non-cognate amino acids such as alanine and cysteine, to avoid such errors it has two additional distinct editing activities against alanine. One activity is designated as 'pretransfer' editing and involves the tRNA(Pro)-independent hydrolysis of activated Ala-AMP. The other activity is designated 'posttransfer' editing and involves deacylation of mischarged Ala-tRNA(Pro). The misacylated Cys-tRNA(Pro) is not edited by ProRS. The polypeptide is Proline--tRNA ligase (Alteromonas mediterranea (strain DSM 17117 / CIP 110805 / LMG 28347 / Deep ecotype)).